We begin with the raw amino-acid sequence, 568 residues long: Oxygen-dependent choline dehydrogenase (568 aa).

An FAD-binding site is contributed by 8–37; it reads DYIIIGAGSAGNTLAARLTEDAGVTVLLLE. The active-site Proton acceptor is histidine 477.

This sequence belongs to the GMC oxidoreductase family. FAD serves as cofactor.

The enzyme catalyses choline + A = betaine aldehyde + AH2. It carries out the reaction betaine aldehyde + NAD(+) + H2O = glycine betaine + NADH + 2 H(+). Its pathway is amine and polyamine biosynthesis; betaine biosynthesis via choline pathway; betaine aldehyde from choline (cytochrome c reductase route): step 1/1. Involved in the biosynthesis of the osmoprotectant glycine betaine. Catalyzes the oxidation of choline to betaine aldehyde and betaine aldehyde to glycine betaine at the same rate. The polypeptide is Oxygen-dependent choline dehydrogenase (Pseudomonas savastanoi pv. phaseolicola (strain 1448A / Race 6) (Pseudomonas syringae pv. phaseolicola (strain 1448A / Race 6))).